A 64-amino-acid polypeptide reads, in one-letter code: Large ribosomal subunit protein bL35 (64 aa).

Positions M1–Q26 are enriched in basic residues. The interval M1 to K46 is disordered.

It belongs to the bacterial ribosomal protein bL35 family.

This chain is Large ribosomal subunit protein bL35, found in Mycoplasmoides gallisepticum (strain R(low / passage 15 / clone 2)) (Mycoplasma gallisepticum).